The sequence spans 944 residues: Protein translocase subunit SecA (944 aa).

Residues Gln-96, 114 to 118, and Asp-554 each bind ATP; that span reads GEGKT.

It belongs to the SecA family. As to quaternary structure, monomer and homodimer. Part of the essential Sec protein translocation apparatus which comprises SecA, SecYEG and auxiliary proteins SecDF. Other proteins may also be involved.

Its subcellular location is the cell inner membrane. It is found in the cytoplasm. The enzyme catalyses ATP + H2O + cellular proteinSide 1 = ADP + phosphate + cellular proteinSide 2.. Its function is as follows. Part of the Sec protein translocase complex. Interacts with the SecYEG preprotein conducting channel. Has a central role in coupling the hydrolysis of ATP to the transfer of proteins into and across the cell membrane, serving as an ATP-driven molecular motor driving the stepwise translocation of polypeptide chains across the membrane. The protein is Protein translocase subunit SecA of Hydrogenobaculum sp. (strain Y04AAS1).